The sequence spans 130 residues: Albumin-1 E (130 aa).

The first 26 residues, 1-26 (MASVKLASLIVLFATLGMFLTKNVGA), serve as a signal peptide directing secretion. Disulfide bonds link Cys29–Cys46, Cys33–Cys48, and Cys41–Cys58. Propeptides lie at residues 64–69 (VFLKGN) and 123–130 (LLKSVSTA).

Post-translationally, the C-terminal glycine may be removed from PA1b.

Its function is as follows. PA1b binds to basic 7S globulin (BG) and stimulates its phosphorylation activity. Involved in the signal transduction system to regulate the growth and differentiation as a hormone peptide. Toxic to various insects through binding to a high affinity binding site in the insect gut. This is Albumin-1 E from Pisum sativum (Garden pea).